The primary structure comprises 475 residues: Phosphoethanolamine N-methyltransferase 1 (475 aa).

Belongs to the class I-like SAM-binding methyltransferase superfamily.

The enzyme catalyses phosphoethanolamine + S-adenosyl-L-methionine = N-methylethanolamine phosphate + S-adenosyl-L-homocysteine + H(+). The protein operates within phospholipid metabolism; phosphatidylcholine biosynthesis; phosphocholine from phosphoethanolamine. Feedback inhibition by phosphatidylcholine. In terms of biological role, catalyzes the first step in the synthesis of phosphocholine by converting phosphoethanolamine into phospho-monomethylethanolamine (N-methylethanolamine phosphate). Phosphocholine is a precursor for phosphatidylcholine, a major component in membranes and a precursor itself in the production of glycoconjugates secreted by parasitic nematodes to avoid host immune responses. The chain is Phosphoethanolamine N-methyltransferase 1 from Caenorhabditis elegans.